Reading from the N-terminus, the 355-residue chain is Ataxin-3-like protein (355 aa).

A Josephin domain is found at 1-180 (MDFIFHEKQE…DCEADQLLQI (180 aa)). Residue Cys14 is the Nucleophile of the active site. His119 (proton acceptor) is an active-site residue. Asn134 is an active-site residue. 2 disordered regions span residues 209–230 (LEKVSEESDESGTSDQDEEDFQ) and 253–331 (LSMQ…DISE). Over residues 215 to 228 (ESDESGTSDQDEED) the composition is skewed to acidic residues. 2 UIM domains span residues 224-243 (QDEEDFQRALELSRQETNRE) and 244-258 (DEHLRSTIELSMQGS). Positions 253 to 276 (LSMQGSSGNTSQDLPKTSCVTPAS) are enriched in polar residues. The span at 278–293 (QPKKIKEDYFEKHQQE) shows a compositional bias: basic and acidic residues.

Widely expressed.

The protein localises to the nucleus. The catalysed reaction is Thiol-dependent hydrolysis of ester, thioester, amide, peptide and isopeptide bonds formed by the C-terminal Gly of ubiquitin (a 76-residue protein attached to proteins as an intracellular targeting signal).. Deubiquitinating enzyme that cleaves both 'Lys-48'-linked and 'Lys-63'-linked poly-ubiquitin chains (in vitro). Acts as a deubiquitinating enzyme for the transcription factor KLF5, playing a role in the regulation of KLF5 stability. This chain is Ataxin-3-like protein, found in Homo sapiens (Human).